The sequence spans 347 residues: GMP reductase (347 aa).

108 to 131 (ADFEKTKQILDLNPALNFVCIDVA) is a binding site for NADP(+). Residues Gly-181 and Gly-183 each coordinate K(+). Residue Cys-186 is the Thioimidate intermediate of the active site. Residue 216 to 239 (IVSDGGCTTPGDVAKAFGGGADFV) participates in NADP(+) binding.

It belongs to the IMPDH/GMPR family. GuaC type 1 subfamily. As to quaternary structure, homotetramer.

The enzyme catalyses IMP + NH4(+) + NADP(+) = GMP + NADPH + 2 H(+). In terms of biological role, catalyzes the irreversible NADPH-dependent deamination of GMP to IMP. It functions in the conversion of nucleobase, nucleoside and nucleotide derivatives of G to A nucleotides, and in maintaining the intracellular balance of A and G nucleotides. This chain is GMP reductase, found in Escherichia coli O7:K1 (strain IAI39 / ExPEC).